Consider the following 184-residue polypeptide: Probable RNA 2'-phosphotransferase (184 aa).

This sequence belongs to the KptA/TPT1 family.

Removes the 2'-phosphate from RNA via an intermediate in which the phosphate is ADP-ribosylated by NAD followed by a presumed transesterification to release the RNA and generate ADP-ribose 1''-2''-cyclic phosphate (APPR&gt;P). May function as an ADP-ribosylase. In Escherichia coli (strain K12 / MC4100 / BW2952), this protein is Probable RNA 2'-phosphotransferase.